Reading from the N-terminus, the 427-residue chain is Trigger factor (427 aa).

A PPIase FKBP-type domain is found at 163 to 248 (GDTVVIDFVG…VNEVKAKEVP (86 aa)).

Belongs to the FKBP-type PPIase family. Tig subfamily.

The protein localises to the cytoplasm. The catalysed reaction is [protein]-peptidylproline (omega=180) = [protein]-peptidylproline (omega=0). Functionally, involved in protein export. Acts as a chaperone by maintaining the newly synthesized protein in an open conformation. Functions as a peptidyl-prolyl cis-trans isomerase. The chain is Trigger factor from Streptococcus thermophilus (strain CNRZ 1066).